The primary structure comprises 130 residues: Protein ApaG (130 aa).

The 125-residue stretch at 3–127 (RALTRDIEVT…FSLDSPGLVR (125 aa)) folds into the ApaG domain.

The sequence is that of Protein ApaG from Rhizobium meliloti (strain 1021) (Ensifer meliloti).